The chain runs to 126 residues: Small ribosomal subunit protein bS6 (126 aa).

Residues 101 to 126 (VMMKAKEERTAKREDAAPRAEEAAAE) form a disordered region. Over residues 104–126 (KAKEERTAKREDAAPRAEEAAAE) the composition is skewed to basic and acidic residues.

The protein belongs to the bacterial ribosomal protein bS6 family.

In terms of biological role, binds together with bS18 to 16S ribosomal RNA. The protein is Small ribosomal subunit protein bS6 of Aliivibrio salmonicida (strain LFI1238) (Vibrio salmonicida (strain LFI1238)).